The chain runs to 373 residues: 8-amino-7-oxononanoate synthase (373 aa).

Arg16 is a binding site for substrate. 93-94 provides a ligand contact to pyridoxal 5'-phosphate; sequence GF. Position 118 (His118) interacts with substrate. Pyridoxal 5'-phosphate is bound by residues Ser165, 190-193, and 222-225; these read DEAH and TFSK. Lys225 carries the post-translational modification N6-(pyridoxal phosphate)lysine. Thr334 contributes to the substrate binding site.

This sequence belongs to the class-II pyridoxal-phosphate-dependent aminotransferase family. BioF subfamily. In terms of assembly, homodimer. The cofactor is pyridoxal 5'-phosphate.

The enzyme catalyses 6-carboxyhexanoyl-[ACP] + L-alanine + H(+) = (8S)-8-amino-7-oxononanoate + holo-[ACP] + CO2. Its pathway is cofactor biosynthesis; biotin biosynthesis. Functionally, catalyzes the decarboxylative condensation of pimeloyl-[acyl-carrier protein] and L-alanine to produce 8-amino-7-oxononanoate (AON), [acyl-carrier protein], and carbon dioxide. This Helicobacter pylori (strain ATCC 700392 / 26695) (Campylobacter pylori) protein is 8-amino-7-oxononanoate synthase.